The chain runs to 730 residues: Acetylene hydratase (730 aa).

2 residues coordinate [4Fe-4S] cluster: cysteine 9 and cysteine 12. The active site involves aspartate 13. [4Fe-4S] cluster contacts are provided by cysteine 16 and cysteine 46. W-bis(molybdopterin guanine dinucleotide)-binding positions include lysine 48, 111–114 (TEIN), cysteine 141, 172–173 (KN), 177–179 (HNW), 199–202 (LDPR), 218–221 (YGTD), serine 296, glutamine 300, 416–418 (ASN), 422–423 (GY), 442–444 (YDQ), aspartate 460, arginine 465, 602–613 (FAGLREDSNFQS), arginine 606, histidine 676, aspartate 699, and arginine 720.

Belongs to the prokaryotic molybdopterin-containing oxidoreductase family. In terms of assembly, monomer. [4Fe-4S] cluster serves as cofactor. The cofactor is W-bis(molybdopterin guanine dinucleotide).

It catalyses the reaction acetaldehyde = acetylene + H2O. Catalyzes the hydration of acetylene to form acetaldehyde. Ethylene cannot act as a substrate. This chain is Acetylene hydratase, found in Syntrophotalea acetylenica (Pelobacter acetylenicus).